The primary structure comprises 290 residues: Fructose-bisphosphate aldolase (290 aa).

Ser-51 contacts D-glyceraldehyde 3-phosphate. Asp-86 functions as the Proton donor in the catalytic mechanism. Zn(2+) contacts are provided by His-87, Asp-107, Glu-137, and His-179. Gly-180 is a dihydroxyacetone phosphate binding site. Position 208 (His-208) interacts with Zn(2+). Residues 209–211 and 230–233 each bind dihydroxyacetone phosphate; these read GGS and NINT.

It belongs to the class II fructose-bisphosphate aldolase family. Homodimer. The cofactor is Zn(2+).

The enzyme catalyses beta-D-fructose 1,6-bisphosphate = D-glyceraldehyde 3-phosphate + dihydroxyacetone phosphate. Its pathway is carbohydrate degradation; glycolysis; D-glyceraldehyde 3-phosphate and glycerone phosphate from D-glucose: step 4/4. Its function is as follows. Catalyzes the aldol condensation of dihydroxyacetone phosphate (DHAP or glycerone-phosphate) with glyceraldehyde 3-phosphate (G3P) to form fructose 1,6-bisphosphate (FBP) in gluconeogenesis and the reverse reaction in glycolysis. The chain is Fructose-bisphosphate aldolase (fba) from Ureaplasma parvum serovar 3 (strain ATCC 700970).